Reading from the N-terminus, the 452-residue chain is tRNA modification GTPase MnmE (452 aa).

3 residues coordinate (6S)-5-formyl-5,6,7,8-tetrahydrofolate: Arg-21, Glu-78, and Lys-118. In terms of domain architecture, TrmE-type G spans 214–375; it reads GMKVVIAGRP…LREHLKQAMG (162 aa). Residue Asn-224 coordinates K(+). GTP-binding positions include 224–229, 243–249, and 268–271; these read NAGKSS, TDIAGTT, and DTAG. Ser-228 is a binding site for Mg(2+). 3 residues coordinate K(+): Thr-243, Ile-245, and Thr-248. Thr-249 is a Mg(2+) binding site. Position 452 (Lys-452) interacts with (6S)-5-formyl-5,6,7,8-tetrahydrofolate.

Belongs to the TRAFAC class TrmE-Era-EngA-EngB-Septin-like GTPase superfamily. TrmE GTPase family. As to quaternary structure, homodimer. Heterotetramer of two MnmE and two MnmG subunits. K(+) serves as cofactor.

The protein resides in the cytoplasm. Exhibits a very high intrinsic GTPase hydrolysis rate. Involved in the addition of a carboxymethylaminomethyl (cmnm) group at the wobble position (U34) of certain tRNAs, forming tRNA-cmnm(5)s(2)U34. The chain is tRNA modification GTPase MnmE from Haemophilus influenzae (strain PittEE).